Consider the following 323-residue polypeptide: Pseudouridylate synthase TRUB2, mitochondrial (323 aa).

Aspartate 98 (nucleophile) is an active-site residue. Residues 302–323 (SGHQQQLPSAGQPWASRVQAPL) form a disordered region.

Belongs to the pseudouridine synthase TruB family. As to quaternary structure, forms a regulatory protein-RNA complex, consisting of RCC1L, NGRN, RPUSD3, RPUSD4, TRUB2, FASTKD2 and 16S mt-rRNA.

It localises to the mitochondrion matrix. The enzyme catalyses a uridine in mRNA = a pseudouridine in mRNA. It carries out the reaction uridine(55) in tRNA = pseudouridine(55) in tRNA. Functionally, minor enzyme contributing to the isomerization of uridine to pseudouridine (pseudouridylation) of specific mitochondrial mRNAs (mt-mRNAs) such as COXI and COXIII mt-mRNAs. As a component of a functional protein-RNA module, consisting of RCC1L, NGRN, RPUSD3, RPUSD4, TRUB2, FASTKD2 and 16S mitochondrial ribosomal RNA (16S mt-rRNA), controls 16S mt-rRNA abundance and is required for intra-mitochondrial translation. Also catalyzes pseudouridylation of some tRNAs, including synthesis of pseudouridine(55) from uracil-55, in the psi GC loop of a subset of tRNAs. This chain is Pseudouridylate synthase TRUB2, mitochondrial, found in Rattus norvegicus (Rat).